Reading from the N-terminus, the 113-residue chain is Large ribosomal subunit protein uL22 (113 aa).

Belongs to the universal ribosomal protein uL22 family. Part of the 50S ribosomal subunit.

Its function is as follows. This protein binds specifically to 23S rRNA; its binding is stimulated by other ribosomal proteins, e.g. L4, L17, and L20. It is important during the early stages of 50S assembly. It makes multiple contacts with different domains of the 23S rRNA in the assembled 50S subunit and ribosome. The globular domain of the protein is located near the polypeptide exit tunnel on the outside of the subunit, while an extended beta-hairpin is found that lines the wall of the exit tunnel in the center of the 70S ribosome. The protein is Large ribosomal subunit protein uL22 of Geobacillus sp. (strain WCH70).